A 170-amino-acid polypeptide reads, in one-letter code: Envelope protein 166 (170 aa).

A topological domain (intravirion) is located at residue methionine 1. The chain crosses the membrane as a helical span at residues 2-22; that stretch reads FYPVVQVLIGIILVIILILGF. The Virion surface segment spans residues 23–170; it reads YHMKHKPPKK…TVMGIARNVL (148 aa).

The protein belongs to the asfivirus envelope protein p22 family.

The protein localises to the virion membrane. The protein resides in the host cell membrane. This Ornithodoros (relapsing fever ticks) protein is Envelope protein 166.